Here is a 307-residue protein sequence, read N- to C-terminus: Nicotinamide/nicotinic acid mononucleotide adenylyltransferase 2 (307 aa).

2 residues coordinate NAD(+): S16 and F17. H24 serves as a coordination point for ATP. The NAD(+) site is built by W92, T95, G200, D202, L212, W213, and R232. An ATP-binding site is contributed by 271–274 (TKSR).

The protein belongs to the eukaryotic NMN adenylyltransferase family. As to quaternary structure, monomer. Mg(2+) is required as a cofactor.

The protein resides in the golgi apparatus membrane. The protein localises to the cytoplasmic vesicle membrane. Its subcellular location is the cytoplasm. It localises to the cell projection. It is found in the axon. The enzyme catalyses beta-nicotinamide D-ribonucleotide + ATP + H(+) = diphosphate + NAD(+). It catalyses the reaction nicotinate beta-D-ribonucleotide + ATP + H(+) = deamido-NAD(+) + diphosphate. The protein operates within cofactor biosynthesis; NAD(+) biosynthesis; NAD(+) from nicotinamide D-ribonucleotide: step 1/1. It participates in cofactor biosynthesis; NAD(+) biosynthesis; deamido-NAD(+) from nicotinate D-ribonucleotide: step 1/1. Functionally, nicotinamide/nicotinate-nucleotide adenylyltransferase that acts as an axon maintenance factor. Axon survival factor required for the maintenance of healthy axons: acts by delaying Wallerian axon degeneration, an evolutionarily conserved process that drives the loss of damaged axons. Catalyzes the formation of NAD(+) from nicotinamide mononucleotide (NMN) and ATP. Can also use the deamidated form; nicotinic acid mononucleotide (NaMN) as substrate but with a lower efficiency. Also catalyzes the reverse reaction, i.e. the pyrophosphorolytic cleavage of NAD(+). For the pyrophosphorolytic activity prefers NAD(+), NADH and NaAD as substrates and degrades nicotinic acid adenine dinucleotide phosphate (NHD) less effectively. Also acts as an activator of ADP-ribosylation by supporting the catalytic activity of PARP16 and promoting mono-ADP-ribosylation of ribosomes by PARP16. May be involved in the maintenance of axonal integrity. This is Nicotinamide/nicotinic acid mononucleotide adenylyltransferase 2 (nmnat2) from Xenopus tropicalis (Western clawed frog).